A 285-amino-acid chain; its full sequence is Thrombin-like enzyme TLBm (285 aa).

Residues 1–273 (VIGGDECNIN…HLDWSQSVIA (273 aa)) form the Peptidase S1 domain. 6 disulfide bridges follow: cysteine 7–cysteine 181, cysteine 30–cysteine 46, cysteine 94–cysteine 284, cysteine 156–cysteine 234, cysteine 192–cysteine 209, and cysteine 224–cysteine 249. Active-site charge relay system residues include histidine 45 and aspartate 113. The Charge relay system role is filled by serine 228.

The protein belongs to the peptidase S1 family. Snake venom subfamily. As to quaternary structure, monomer. In terms of processing, homologous thrombin-like enzymes are N-glycosylated. This enzyme does not contain the consensus glycosylation sites, suggesting it is not glycosylated. As to expression, expressed by the venom gland.

The protein resides in the secreted. Inhibited by PMSF, disodium-EDTA, S(Dm) and soybean trypsin inhibitor (SBTI). SBTI and S(Dm) (the anti-hemorrhagic protein) acts as a non-competitive inhibitors that decrease the enzymatic activity. Its function is as follows. Thrombin-like enzyme that induces the formation of fibrin clot. Cleaves the Aalpha-chain of fibrinogen (FGA) with higher activity than the Bbeta-chain (FGB). Induces platelet aggregation in both platelet-rich plasma and in washed platelet preparations. This aggregation is strongly inhibited by preincubation of the enzyme with PMSF. The protein is Thrombin-like enzyme TLBm of Bothrops marajoensis (Marajo lancehead).